Consider the following 345-residue polypeptide: Holliday junction branch migration complex subunit RuvB (345 aa).

The tract at residues 3–187 (LDILQNRNNL…FGFTARLDFY (185 aa)) is large ATPase domain (RuvB-L). ATP is bound by residues Leu-26, Arg-27, Gly-68, Lys-71, Thr-72, Thr-73, 134–136 (EDF), Arg-177, Tyr-187, and Arg-224. A Mg(2+)-binding site is contributed by Thr-72. A small ATPAse domain (RuvB-S) region spans residues 188–259 (SPEELLQVLI…IALKAMDVYE (72 aa)). The tract at residues 262 to 345 (SLGLDRLDRA…EDLSGFELYL (84 aa)) is head domain (RuvB-H). Positions 317 and 322 each coordinate DNA.

It belongs to the RuvB family. Homohexamer. Forms an RuvA(8)-RuvB(12)-Holliday junction (HJ) complex. HJ DNA is sandwiched between 2 RuvA tetramers; dsDNA enters through RuvA and exits via RuvB. An RuvB hexamer assembles on each DNA strand where it exits the tetramer. Each RuvB hexamer is contacted by two RuvA subunits (via domain III) on 2 adjacent RuvB subunits; this complex drives branch migration. In the full resolvosome a probable DNA-RuvA(4)-RuvB(12)-RuvC(2) complex forms which resolves the HJ.

It is found in the cytoplasm. It carries out the reaction ATP + H2O = ADP + phosphate + H(+). In terms of biological role, the RuvA-RuvB-RuvC complex processes Holliday junction (HJ) DNA during genetic recombination and DNA repair, while the RuvA-RuvB complex plays an important role in the rescue of blocked DNA replication forks via replication fork reversal (RFR). RuvA specifically binds to HJ cruciform DNA, conferring on it an open structure. The RuvB hexamer acts as an ATP-dependent pump, pulling dsDNA into and through the RuvAB complex. RuvB forms 2 homohexamers on either side of HJ DNA bound by 1 or 2 RuvA tetramers; 4 subunits per hexamer contact DNA at a time. Coordinated motions by a converter formed by DNA-disengaged RuvB subunits stimulates ATP hydrolysis and nucleotide exchange. Immobilization of the converter enables RuvB to convert the ATP-contained energy into a lever motion, pulling 2 nucleotides of DNA out of the RuvA tetramer per ATP hydrolyzed, thus driving DNA branch migration. The RuvB motors rotate together with the DNA substrate, which together with the progressing nucleotide cycle form the mechanistic basis for DNA recombination by continuous HJ branch migration. Branch migration allows RuvC to scan DNA until it finds its consensus sequence, where it cleaves and resolves cruciform DNA. This chain is Holliday junction branch migration complex subunit RuvB, found in Tropheryma whipplei (strain TW08/27) (Whipple's bacillus).